The primary structure comprises 340 residues: Putative 2-hydroxyacid dehydrogenase C1773.17c (340 aa).

Residues A169–I170, T249–R251, and D275 each bind NAD(+). R251 is an active-site residue. Residue E280 is part of the active site. H298 (proton donor) is an active-site residue. Residue H298 to V301 participates in NAD(+) binding.

This sequence belongs to the D-isomer specific 2-hydroxyacid dehydrogenase family.

The chain is Putative 2-hydroxyacid dehydrogenase C1773.17c from Schizosaccharomyces pombe (strain 972 / ATCC 24843) (Fission yeast).